An 843-amino-acid polypeptide reads, in one-letter code: Elongation factor 2 (843 aa).

The tr-type G domain occupies 17-253; the sequence is HNIRNMSVIA…LWGENFFDPA (237 aa). Position 26-33 (26-33) interacts with GTP; sequence AHVDHGKS. A phosphothreonine mark is found at Thr57 and Thr59. Residue 158–161 participates in GTP binding; the sequence is NKMD. His700 bears the Diphthamide mark.

The protein belongs to the TRAFAC class translation factor GTPase superfamily. Classic translation factor GTPase family. EF-G/EF-2 subfamily. Post-translationally, phosphorylation by EF-2 kinase completely inactivates EF-2.

Its subcellular location is the cytoplasm. The enzyme catalyses GTP + H2O = GDP + phosphate + H(+). Its function is as follows. Catalyzes the GTP-dependent ribosomal translocation step during translation elongation. During this step, the ribosome changes from the pre-translocational (PRE) to the post-translocational (POST) state as the newly formed A-site-bound peptidyl-tRNA and P-site-bound deacylated tRNA move to the P and E sites, respectively. Catalyzes the coordinated movement of the two tRNA molecules, the mRNA and conformational changes in the ribosome. The polypeptide is Elongation factor 2 (Beta vulgaris (Sugar beet)).